The following is a 191-amino-acid chain: Fe/S biogenesis protein NfuA (191 aa).

[4Fe-4S] cluster is bound by residues Cys-149 and Cys-152.

It belongs to the NfuA family. As to quaternary structure, homodimer. The cofactor is [4Fe-4S] cluster.

Involved in iron-sulfur cluster biogenesis. Binds a 4Fe-4S cluster, can transfer this cluster to apoproteins, and thereby intervenes in the maturation of Fe/S proteins. Could also act as a scaffold/chaperone for damaged Fe/S proteins. The chain is Fe/S biogenesis protein NfuA from Hamiltonella defensa subsp. Acyrthosiphon pisum (strain 5AT).